We begin with the raw amino-acid sequence, 427 residues long: Enolase (427 aa).

Gln-163 serves as a coordination point for (2R)-2-phosphoglycerate. The active-site Proton donor is Glu-205. Mg(2+) contacts are provided by Asp-242, Glu-285, and Asp-312. (2R)-2-phosphoglycerate-binding residues include Lys-337, Arg-366, Ser-367, and Lys-388. The active-site Proton acceptor is the Lys-337.

It belongs to the enolase family. The cofactor is Mg(2+).

It is found in the cytoplasm. The protein localises to the secreted. It localises to the cell surface. It carries out the reaction (2R)-2-phosphoglycerate = phosphoenolpyruvate + H2O. It functions in the pathway carbohydrate degradation; glycolysis; pyruvate from D-glyceraldehyde 3-phosphate: step 4/5. In terms of biological role, catalyzes the reversible conversion of 2-phosphoglycerate (2-PG) into phosphoenolpyruvate (PEP). It is essential for the degradation of carbohydrates via glycolysis. The chain is Enolase from Rhodopseudomonas palustris (strain TIE-1).